The sequence spans 528 residues: MWLELGAMLRTTCGPLGRAVRLPCAGALRLRPHWWGPCRDCLAQRVHQDQPGRGLTEDEIRRAREARLRKAPRPQLSDRSRERKVPASRISRLASFGGLAVGLGLGALAEVTKKSLPGGSLQHEGSSPFLTEANAERIVQTLCTVRGAALKIGQMLSIQDNSLISPQLQRVFERVRQSADFMPRWQMMKVLEEELGKDWQDKVASLEEVPFAAASIGQVHQGVLKDGTEVAVKIQYPGVAESIQSDVQNLLALLKMSVGLPEGLFAEQSLQTLQQELAWECDYRREAACAQTFKKLLADDPFFRVPAVVEELCTTRVLGMELAGGIPLDQCQGLSQDIRNQICFQLLRLCLRELFEFRFMQTDPNWANFLYDASSHKVTLLDFGASRAFGTEFTDHYIEVVKAAADGDRDRVLQKSQDLKFLTGFETKAFSDAHVEAVMILGEPFAASGSYDFGAGETARRIQGLIPVLLRHRLRPPPEETYALHRKLAGAFLACARLHAHIACRDLFQDTYHRYWASRQTLPLPAAS.

A helical membrane pass occupies residues 93–109 (LASFGGLAVGLGLGALA). A KxGQ motif motif is present at residues 151-154 (KIGQ). Positions 187–419 (MMKVLEEELG…DRVLQKSQDL (233 aa)) constitute a Protein kinase domain. Residues 212 to 215 (AAAS) carry the AAAS motif motif. ATP is bound by residues Ser-215, Lys-233, and 320–323 (MELA). Asp-363 functions as the Proton acceptor in the catalytic mechanism. Asn-368 and Asp-382 together coordinate ATP.

This sequence belongs to the protein kinase superfamily. ADCK protein kinase family. In terms of assembly, homodimer; homodimerizes via its transmembrane region. Interacts with COQ6 and COQ7. Interacts with the multi-subunit COQ enzyme complex, composed of at least COQ3, COQ4, COQ5, COQ6, COQ7 and COQ9. In terms of tissue distribution, in the kidney, expressed in glomeruli, predominantly in podocyte foot precesses, as well as in proximal tubules and collecting ducts (at protein level).

The protein resides in the mitochondrion membrane. It is found in the cytoplasm. It localises to the cytosol. Its subcellular location is the cell membrane. It participates in cofactor biosynthesis; ubiquinone biosynthesis. In terms of biological role, atypical kinase involved in the biosynthesis of coenzyme Q, also named ubiquinone, an essential lipid-soluble electron transporter for aerobic cellular respiration. Its substrate specificity is still unclear: may act as a protein kinase that mediates phosphorylation of COQ3. According to other reports, acts as a small molecule kinase, possibly a lipid kinase that phosphorylates a prenyl lipid in the ubiquinone biosynthesis pathway, as suggested by its ability to bind coenzyme Q lipid intermediates. However, the small molecule kinase activity was not confirmed by another publication. Required for podocyte migration. The chain is Atypical kinase COQ8B, mitochondrial from Rattus norvegicus (Rat).